The sequence spans 240 residues: tRNA1(Val) (adenine(37)-N6)-methyltransferase (240 aa).

The protein belongs to the methyltransferase superfamily. tRNA (adenine-N(6)-)-methyltransferase family.

The protein localises to the cytoplasm. It catalyses the reaction adenosine(37) in tRNA1(Val) + S-adenosyl-L-methionine = N(6)-methyladenosine(37) in tRNA1(Val) + S-adenosyl-L-homocysteine + H(+). Its function is as follows. Specifically methylates the adenine in position 37 of tRNA(1)(Val) (anticodon cmo5UAC). The sequence is that of tRNA1(Val) (adenine(37)-N6)-methyltransferase from Photobacterium profundum (strain SS9).